The chain runs to 688 residues: MAHLLGSPACMDSLRKDLTDLQGAIVDVFSRAGPVRFPSWKFPDRAACDLDMVALLEHYDHVPGDPEFTQLAHAVLLELVIDRLLLLLQSCASYLENLTLEQIVPPARAAGPCMSVGLTVRRFWNSLLRLGMLSQQAALQKRANQGETLTSKPTAKGEPAGSRELGTAQLVKPPSPVPGLPQACPERDSLPVSVSLRRPGGTAENTRSVHSQTIETALVPCDACTSVQSSLREVGKVVINLCQSQNLPSSLGRFQQLVRDSMGHRPLPAATVGLWAAEQSKDLACLGKLVGLLRAQLEEAEGQKDRLRMQVGELEQALQEEQAARQRQAQEAEQHRAQWERERQQLLAETSDLKTKVATLEGELKQQRESTQAVESKAQQLQAEAEHRLEAERQVQHLEQQVELLAGRLDGASQQIRWASTELDKEKARVDSMVRHQESLQAKQRALLQQLDSLDQEREELRGSLDEAEAQRAHVEEQLQSVQGEREQATTDLRLTISELERELVELRERERLLVAFPDLHRPAEAQIQSSGNVTDDMERQVQANDIRIRVLQEENGRLRSMLSKIREVAQQGGLKLIPEDQLWALRSKGIQGAEPPLQTARTSPGAPGRRHLPGSRPASAGRTLPGQPQASPPLRPHRRPGESSPEDATYLTNCAQSPIRALARLRRRLSPSSGRASPAHQPQERPT.

The span at 143–153 (ANQGETLTSKP) shows a compositional bias: polar residues. 5 disordered regions span residues 143–162 (ANQGETLTSKPTAKGEPAGS), 168–189 (AQLVKPPSPVPGLPQACPERDS), 322–341 (QAARQRQAQEAEQHRAQWER), 366–385 (QQRESTQAVESKAQQLQAEA), and 592–688 (QGAE…ERPT). Positions 288 to 572 (KLVGLLRAQL…LSKIREVAQQ (285 aa)) form a coiled coil. Positions 369 to 382 (ESTQAVESKAQQLQ) are enriched in polar residues. The span at 671–680 (SPSSGRASPA) shows a compositional bias: low complexity.

This is Coiled-coil domain-containing protein 157 (CCDC157) from Bos taurus (Bovine).